The chain runs to 402 residues: 3-isopropylmalate dehydratase large subunit 2 (402 aa).

The [4Fe-4S] cluster site is built by Cys280, Cys341, and Cys344.

It belongs to the aconitase/IPM isomerase family. LeuC type 2 subfamily. In terms of assembly, heterodimer of LeuC and LeuD. [4Fe-4S] cluster is required as a cofactor.

The enzyme catalyses (2R,3S)-3-isopropylmalate = (2S)-2-isopropylmalate. It participates in amino-acid biosynthesis; L-leucine biosynthesis; L-leucine from 3-methyl-2-oxobutanoate: step 2/4. Functionally, catalyzes the isomerization between 2-isopropylmalate and 3-isopropylmalate, via the formation of 2-isopropylmaleate. This is 3-isopropylmalate dehydratase large subunit 2 from Methanopyrus kandleri (strain AV19 / DSM 6324 / JCM 9639 / NBRC 100938).